The sequence spans 245 residues: tRNA pseudouridine synthase A (245 aa).

Catalysis depends on aspartate 52, which acts as the Nucleophile. Tyrosine 112 provides a ligand contact to substrate.

Belongs to the tRNA pseudouridine synthase TruA family. Homodimer.

The catalysed reaction is uridine(38/39/40) in tRNA = pseudouridine(38/39/40) in tRNA. Formation of pseudouridine at positions 38, 39 and 40 in the anticodon stem and loop of transfer RNAs. This is tRNA pseudouridine synthase A from Dictyoglomus turgidum (strain DSM 6724 / Z-1310).